A 554-amino-acid polypeptide reads, in one-letter code: Undecaprenyl phosphate-alpha-4-amino-4-deoxy-L-arabinose arabinosyl transferase (554 aa).

11 helical membrane-spanning segments follow: residues 4-24, 87-107, 115-135, 178-198, 206-226, 262-282, 293-313, 315-335, 351-371, 384-404, and 414-434; these read LKDS…LLPV, FGSI…ATLL, VLAT…TYAV, FMTK…PIVI, LVVF…PWAL, YLPI…GALF, ELFF…VAKG, LPTY…AYAT, VINL…GLGL, QKVW…FITL, and AAAC…QQVV.

Belongs to the glycosyltransferase 83 family.

The protein localises to the cell inner membrane. The catalysed reaction is 4-amino-4-deoxy-alpha-L-arabinopyranosyl di-trans,octa-cis-undecaprenyl phosphate + lipid IVA = lipid IIA + di-trans,octa-cis-undecaprenyl phosphate.. The protein operates within lipopolysaccharide metabolism; 4-amino-4-deoxy-beta-L-arabinose-lipid A biosynthesis. Functionally, catalyzes the transfer of the L-Ara4N moiety of the glycolipid undecaprenyl phosphate-alpha-L-Ara4N to lipid A. The modified arabinose is attached to lipid A and is required for resistance to polymyxin and cationic antimicrobial peptides. This is Undecaprenyl phosphate-alpha-4-amino-4-deoxy-L-arabinose arabinosyl transferase from Yersinia pseudotuberculosis serotype O:1b (strain IP 31758).